The primary structure comprises 154 residues: uncharacterized protein (154 aa).

This is an uncharacterized protein from Schizosaccharomyces pombe (strain 972 / ATCC 24843) (Fission yeast).